The chain runs to 498 residues: Probable cytosol aminopeptidase (498 aa).

Mn(2+)-binding residues include lysine 271 and aspartate 276. Residue lysine 283 is part of the active site. Positions 294, 353, and 355 each coordinate Mn(2+). The active site involves arginine 357.

The protein belongs to the peptidase M17 family. Requires Mn(2+) as cofactor.

Its subcellular location is the cytoplasm. The enzyme catalyses Release of an N-terminal amino acid, Xaa-|-Yaa-, in which Xaa is preferably Leu, but may be other amino acids including Pro although not Arg or Lys, and Yaa may be Pro. Amino acid amides and methyl esters are also readily hydrolyzed, but rates on arylamides are exceedingly low.. It carries out the reaction Release of an N-terminal amino acid, preferentially leucine, but not glutamic or aspartic acids.. In terms of biological role, presumably involved in the processing and regular turnover of intracellular proteins. Catalyzes the removal of unsubstituted N-terminal amino acids from various peptides. The sequence is that of Probable cytosol aminopeptidase from Bordetella petrii (strain ATCC BAA-461 / DSM 12804 / CCUG 43448).